A 506-amino-acid chain; its full sequence is Kynureninase 1 (506 aa).

Pyridoxal 5'-phosphate is bound by residues leucine 141, threonine 142, 169–172 (FPSD), aspartate 254, histidine 257, and tyrosine 279. Lysine 280 is modified (N6-(pyridoxal phosphate)lysine). A compositionally biased stretch (low complexity) spans 303 to 319 (ETAPTTTPDGTNGNPKT). The segment at 303–322 (ETAPTTTPDGTNGNPKTISD) is disordered. Residues tryptophan 334 and asparagine 362 each coordinate pyridoxal 5'-phosphate.

The protein belongs to the kynureninase family. As to quaternary structure, homodimer. Requires pyridoxal 5'-phosphate as cofactor.

The protein localises to the cytoplasm. It catalyses the reaction L-kynurenine + H2O = anthranilate + L-alanine + H(+). It carries out the reaction 3-hydroxy-L-kynurenine + H2O = 3-hydroxyanthranilate + L-alanine + H(+). It functions in the pathway amino-acid degradation; L-kynurenine degradation; L-alanine and anthranilate from L-kynurenine: step 1/1. Its pathway is cofactor biosynthesis; NAD(+) biosynthesis; quinolinate from L-kynurenine: step 2/3. In terms of biological role, catalyzes the cleavage of L-kynurenine (L-Kyn) and L-3-hydroxykynurenine (L-3OHKyn) into anthranilic acid (AA) and 3-hydroxyanthranilic acid (3-OHAA), respectively. This chain is Kynureninase 1, found in Phaeosphaeria nodorum (strain SN15 / ATCC MYA-4574 / FGSC 10173) (Glume blotch fungus).